The primary structure comprises 234 residues: Leucyl/phenylalanyl-tRNA--protein transferase (234 aa).

The protein belongs to the L/F-transferase family.

The protein resides in the cytoplasm. It carries out the reaction N-terminal L-lysyl-[protein] + L-leucyl-tRNA(Leu) = N-terminal L-leucyl-L-lysyl-[protein] + tRNA(Leu) + H(+). The enzyme catalyses N-terminal L-arginyl-[protein] + L-leucyl-tRNA(Leu) = N-terminal L-leucyl-L-arginyl-[protein] + tRNA(Leu) + H(+). The catalysed reaction is L-phenylalanyl-tRNA(Phe) + an N-terminal L-alpha-aminoacyl-[protein] = an N-terminal L-phenylalanyl-L-alpha-aminoacyl-[protein] + tRNA(Phe). Functionally, functions in the N-end rule pathway of protein degradation where it conjugates Leu, Phe and, less efficiently, Met from aminoacyl-tRNAs to the N-termini of proteins containing an N-terminal arginine or lysine. The chain is Leucyl/phenylalanyl-tRNA--protein transferase from Pseudoalteromonas atlantica (strain T6c / ATCC BAA-1087).